The chain runs to 166 residues: Lipoprotein signal peptidase (166 aa).

4 helical membrane-spanning segments follow: residues 9–29 (ASGA…FDQL), 45–65 (ALTS…FGFL), 71–91 (WQRW…CFLL), and 100–120 (FSVS…DRLV). Active-site residues include D126 and D144. A helical transmembrane segment spans residues 135–155 (WHFPAFNLADSAITIGAVLLI).

The protein belongs to the peptidase A8 family.

The protein localises to the cell inner membrane. It catalyses the reaction Release of signal peptides from bacterial membrane prolipoproteins. Hydrolyzes -Xaa-Yaa-Zaa-|-(S,diacylglyceryl)Cys-, in which Xaa is hydrophobic (preferably Leu), and Yaa (Ala or Ser) and Zaa (Gly or Ala) have small, neutral side chains.. Its pathway is protein modification; lipoprotein biosynthesis (signal peptide cleavage). This protein specifically catalyzes the removal of signal peptides from prolipoproteins. This chain is Lipoprotein signal peptidase, found in Burkholderia cenocepacia (strain ATCC BAA-245 / DSM 16553 / LMG 16656 / NCTC 13227 / J2315 / CF5610) (Burkholderia cepacia (strain J2315)).